The following is a 218-amino-acid chain: Large ribosomal subunit protein uL1 (218 aa).

The protein belongs to the universal ribosomal protein uL1 family. As to quaternary structure, part of the 50S ribosomal subunit.

Functionally, binds directly to 23S rRNA. Probably involved in E site tRNA release. In terms of biological role, protein L1 is also a translational repressor protein, it controls the translation of its operon by binding to its mRNA. This chain is Large ribosomal subunit protein uL1, found in Metallosphaera sedula (strain ATCC 51363 / DSM 5348 / JCM 9185 / NBRC 15509 / TH2).